The chain runs to 1185 residues: Pyruvate carboxylase (1185 aa).

Positions 32–484 (KFTKVLVANR…WTTFIDDTPE (453 aa)) constitute a Biotin carboxylation domain. 3 residues coordinate ATP: lysine 150, glutamate 234, and histidine 269. The ATP-grasp domain occupies 154–351 (RAIAIRCGVP…IVSAQLHVAA (198 aa)). Arginine 326 is an active-site residue. The Pyruvate carboxyltransferase domain maps to 570-838 (GLIMDTTWRD…QLEFDNNQLR (269 aa)). Substrate-binding positions include 578–582 (RDAHQ) and arginine 651. Aspartate 579 serves as a coordination point for a divalent metal cation. A divalent metal cation-binding residues include lysine 747, histidine 777, and histidine 779. An N6-carboxylysine modification is found at lysine 747. Threonine 912 contributes to the substrate binding site. Residues 1108-1183 (RADPGNPGHV…NGGDLCAVLE (76 aa)) form the Biotinyl-binding domain. The residue at position 1149 (lysine 1149) is an N6-biotinyllysine.

Biotin serves as cofactor. Zn(2+) is required as a cofactor.

The protein resides in the cytoplasm. It catalyses the reaction hydrogencarbonate + pyruvate + ATP = oxaloacetate + ADP + phosphate + H(+). Its pathway is carbohydrate biosynthesis; gluconeogenesis. In terms of biological role, pyruvate carboxylase catalyzes a 2-step reaction, involving the ATP-dependent carboxylation of the covalently attached biotin in the first step and the transfer of the carboxyl group to pyruvate in the second. This Schizosaccharomyces pombe (strain 972 / ATCC 24843) (Fission yeast) protein is Pyruvate carboxylase (pyr1).